The primary structure comprises 864 residues: Probable LRR receptor-like serine/threonine-protein kinase At1g07550 (864 aa).

Residues 1 to 23 (MDTCTRLLFAACATLSILHLVQS) form the signal peptide. The Extracellular segment spans residues 24–507 (QNQQGFISLD…SCGTRFPTAA (484 aa)). 7 N-linked (GlcNAc...) asparagine glycosylation sites follow: Asn49, Asn229, Asn256, Asn289, Asn432, Asn445, and Asn464. LRR repeat units lie at residues 411–434 (RIVKLDLSSSGLNGVIPPSIQNLT), 435–457 (QLQELDLSQNNLTGKVPEFLAKM), and 459–480 (YLLVINLSGNKLSGLVPQALLD). A helical membrane pass occupies residues 508-528 (VAASVSAVAIIILVLVLIFVL). The Cytoplasmic portion of the chain corresponds to 529 to 864 (RRRKPSAGKV…VDTEINPKAR (336 aa)). Thr551 bears the Phosphothreonine mark. Residues 560–831 (NNFQVVIGKG…QVVHVLNECL (272 aa)) form the Protein kinase domain. Residues 566 to 574 (IGKGGFGVV) and Lys587 contribute to the ATP site. Position 632 is a phosphotyrosine (Tyr632). Asp684 serves as the catalytic Proton acceptor. Thr718 and Thr723 each carry phosphothreonine. At Tyr731 the chain carries Phosphotyrosine.

The protein belongs to the protein kinase superfamily. Ser/Thr protein kinase family.

Its subcellular location is the membrane. The enzyme catalyses L-seryl-[protein] + ATP = O-phospho-L-seryl-[protein] + ADP + H(+). It catalyses the reaction L-threonyl-[protein] + ATP = O-phospho-L-threonyl-[protein] + ADP + H(+). This Arabidopsis thaliana (Mouse-ear cress) protein is Probable LRR receptor-like serine/threonine-protein kinase At1g07550.